Consider the following 377-residue polypeptide: Probable O-methyltransferase 3 (377 aa).

Residue Asp-241 participates in S-adenosyl-L-methionine binding. His-279 acts as the Proton acceptor in catalysis.

It belongs to the class I-like SAM-binding methyltransferase superfamily. Cation-independent O-methyltransferase family. In terms of tissue distribution, highly expressed in lupulin glands. Detected in early-, mid- and late-stage cones.

This chain is Probable O-methyltransferase 3, found in Humulus lupulus (European hop).